A 570-amino-acid chain; its full sequence is Molecular chaperone MKKS (570 aa).

192 to 199 (ERMVLGKS) contacts ATP. The tract at residues 198 to 370 (KSIIVPLKGQ…FHLLPNEATV (173 aa)) is substrate-binding apical domain.

This sequence belongs to the TCP-1 chaperonin family. Component of a complex composed at least of MKKS, BBS10, BBS12, TCP1, CCT2, CCT3, CCT4, CCT5 and CCT8. Interacts with STUB1. Interacts with BBS2 (via coiled coil domain). Interacts with CCDC28B. Interacts with BBS12. Interacts with SMARCC1, a component of the SWI/SNF complexes; the interaction takes place predominantly in the cytoplasm and may modulate SMARCC1 location. Interacts with DLEC1. As to expression, widely expressed in adult and fetal tissues. Expressed in the developing heart, brain retina, limb buds, as well as in the developing neural tube. Expressed in the embryo in the first and second branchial arches. Expressed in parafin embedded tissue sections of brain, kidney, retina, olfactory epithelium and the ependymal layer of ventricles. Detected only in restricted regions of these tissue sections, including the ciliated border of renal tubules, the connecting cilium and the inner and outer nuclear layers of retina, and the ciliated layer of olfactory epithelia.

It localises to the cytoplasm. The protein localises to the cytoskeleton. The protein resides in the microtubule organizing center. Its subcellular location is the centrosome. It is found in the cytosol. It localises to the nucleus. Its function is as follows. Probable molecular chaperone that assists the folding of proteins upon ATP hydrolysis. Plays a role in the assembly of BBSome, a complex involved in ciliogenesis regulating transports vesicles to the cilia. May play a role in protein processing in limb, cardiac and reproductive system development. May play a role in cytokinesis. The protein is Molecular chaperone MKKS (Mkks) of Mus musculus (Mouse).